Here is a 520-residue protein sequence, read N- to C-terminus: Cytochrome P450 monooxygenase 98 (520 aa).

Residues 7-27 traverse the membrane as a helical segment; that stretch reads MLNNNLLIVIGTFAVCVYIVL. Cysteine 445 contributes to the heme binding site.

The protein belongs to the cytochrome P450 family. Heme serves as cofactor.

Its subcellular location is the membrane. Its pathway is secondary metabolite biosynthesis. In terms of biological role, cytochrome P450 monooxygenase that is able to use pyrene, phenanthrene, 3,5-dimethoxy-trans-stilbene and 3,5,4'-trimethoxy-trans-stilbene as substrates for oxidation. The protein is Cytochrome P450 monooxygenase 98 of Postia placenta (strain ATCC 44394 / Madison 698-R) (Brown rot fungus).